A 524-amino-acid chain; its full sequence is 2-isopropylmalate synthase (524 aa).

The Pyruvate carboxyltransferase domain maps to 12–274 (VIIFDTTLRD…WNNIETTMLT (263 aa)). Positions 21, 209, 211, and 245 each coordinate Mn(2+). Positions 398 to 524 (KLNSLTVIAG…EAVPAVAAAG (127 aa)) are regulatory domain.

This sequence belongs to the alpha-IPM synthase/homocitrate synthase family. LeuA type 1 subfamily. Homodimer. It depends on Mn(2+) as a cofactor.

The protein localises to the cytoplasm. The catalysed reaction is 3-methyl-2-oxobutanoate + acetyl-CoA + H2O = (2S)-2-isopropylmalate + CoA + H(+). Its pathway is amino-acid biosynthesis; L-leucine biosynthesis; L-leucine from 3-methyl-2-oxobutanoate: step 1/4. In terms of biological role, catalyzes the condensation of the acetyl group of acetyl-CoA with 3-methyl-2-oxobutanoate (2-ketoisovalerate) to form 3-carboxy-3-hydroxy-4-methylpentanoate (2-isopropylmalate). This chain is 2-isopropylmalate synthase, found in Rhodopseudomonas palustris (strain HaA2).